The chain runs to 569 residues: Lysine--tRNA ligase (569 aa).

Positions 414 and 421 each coordinate Mg(2+).

The protein belongs to the class-II aminoacyl-tRNA synthetase family. As to quaternary structure, homodimer. The cofactor is Mg(2+).

The protein resides in the cytoplasm. The catalysed reaction is tRNA(Lys) + L-lysine + ATP = L-lysyl-tRNA(Lys) + AMP + diphosphate. In Christiangramia forsetii (strain DSM 17595 / CGMCC 1.15422 / KT0803) (Gramella forsetii), this protein is Lysine--tRNA ligase.